The chain runs to 93 residues: Small ribosomal subunit protein bS20 (93 aa).

Belongs to the bacterial ribosomal protein bS20 family.

Functionally, binds directly to 16S ribosomal RNA. The protein is Small ribosomal subunit protein bS20 of Dictyoglomus thermophilum (strain ATCC 35947 / DSM 3960 / H-6-12).